The chain runs to 457 residues: Multidrug resistance protein NorM (457 aa).

12 helical membrane passes run 30-50, 53-73, 93-113, 126-146, 159-179, 192-212, 242-262, 276-296, 315-335, 348-368, 391-411, and 416-436; these read FVDT…VSIA, IWLP…PVVA, ILAL…QFII, TVGY…FQAL, AMVI…IFVY, CGVA…FYIV, FPVA…ALLV, ALNF…AVSI, NVGL…TVLF, VVVA…CMDA, FISY…TNWL, and LGAK…ALML.

It belongs to the multi antimicrobial extrusion (MATE) (TC 2.A.66.1) family.

It localises to the cell inner membrane. Its function is as follows. Multidrug efflux pump that functions as a Na(+)/drug antiporter. Confers resistance to norfloxacin, ciprofloxacin, ofloxacin, daunomycin, doxorubicin, streptomycin, kanamycin, ethidium bromide and acriflavine. The sequence is that of Multidrug resistance protein NorM (norM) from Vibrio cholerae serotype O1 (strain ATCC 39315 / El Tor Inaba N16961).